The chain runs to 128 residues: Arginine decarboxylase proenzyme (128 aa).

Ser76 (schiff-base intermediate with substrate; via pyruvic acid) is an active-site residue. Residue Ser76 is modified to Pyruvic acid (Ser); by autocatalysis. His81 serves as the catalytic Proton acceptor; for processing activity. Cys96 functions as the Proton donor; for catalytic activity in the catalytic mechanism.

It belongs to the prokaryotic AdoMetDC family. Type 1 subfamily. In terms of assembly, heterooctamer of four alpha and four beta chains arranged as a tetramer of alpha/beta heterodimers. Pyruvate is required as a cofactor. Is synthesized initially as an inactive proenzyme. Formation of the active enzyme involves a self-maturation process in which the active site pyruvoyl group is generated from an internal serine residue via an autocatalytic post-translational modification. Two non-identical subunits are generated from the proenzyme in this reaction, and the pyruvate is formed at the N-terminus of the alpha chain, which is derived from the carboxyl end of the proenzyme. The post-translation cleavage follows an unusual pathway, termed non-hydrolytic serinolysis, in which the side chain hydroxyl group of the serine supplies its oxygen atom to form the C-terminus of the beta chain, while the remainder of the serine residue undergoes an oxidative deamination to produce ammonia and the pyruvoyl group blocking the N-terminus of the alpha chain.

The enzyme catalyses L-arginine + H(+) = agmatine + CO2. Its pathway is amine and polyamine biosynthesis; agmatine biosynthesis; agmatine from L-arginine: step 1/1. Functionally, specifically catalyzes the decarboxylation of L-arginine to agmatine. Has no S-adenosylmethionine decarboxylase (AdoMetDC) activity. The polypeptide is Arginine decarboxylase proenzyme (Metallosphaera sedula (strain ATCC 51363 / DSM 5348 / JCM 9185 / NBRC 15509 / TH2)).